We begin with the raw amino-acid sequence, 481 residues long: Proline--tRNA ligase (481 aa).

The protein belongs to the class-II aminoacyl-tRNA synthetase family. ProS type 3 subfamily. In terms of assembly, homodimer.

It localises to the cytoplasm. The catalysed reaction is tRNA(Pro) + L-proline + ATP = L-prolyl-tRNA(Pro) + AMP + diphosphate. In terms of biological role, catalyzes the attachment of proline to tRNA(Pro) in a two-step reaction: proline is first activated by ATP to form Pro-AMP and then transferred to the acceptor end of tRNA(Pro). The protein is Proline--tRNA ligase of Chloroherpeton thalassium (strain ATCC 35110 / GB-78).